A 397-amino-acid chain; its full sequence is Probable peptidoglycan glycosyltransferase FtsW (397 aa).

Topologically, residues 1–18 (MSALTLTASKNTQTMTLD) are cytoplasmic. A helical membrane pass occupies residues 19 to 39 (LPLLGSALALAAIGLIMVTSA). The Periplasmic portion of the chain corresponds to 40 to 58 (SVDFADDANGQALYYMWRH). The helical transmembrane segment at 59-79 (LTYLLAGVAVGFVILRLPLEW) threads the bilayer. The Cytoplasmic segment spans residues 80-83 (WHKQ). The helical transmembrane segment at 84–104 (SWLLLVVALGFLVAVLIPGIG) threads the bilayer. Residues 105–112 (RTVNGSTR) are Periplasmic-facing. The helical transmembrane segment at 113–133 (WISLGVINIQASEIAKVCLAI) threads the bilayer. The Cytoplasmic portion of the chain corresponds to 134–148 (YTASYLVRRLDEVRG). Residues 149–169 (SWWGFAKPLLVLMLVALLLLM) form a helical membrane-spanning segment. Over 170 to 172 (EPD) the chain is Periplasmic. Residues 173–193 (FGALVVTMCAVVGMIFLSGVA) form a helical membrane-spanning segment. Residues 194-196 (LSR) are Cytoplasmic-facing. The helical transmembrane segment at 197-217 (FAALLMFCVGSVALLAVSQPY) threads the bilayer. Over 218–272 (RLKRLTAYTDPWADQFDSGYQLTQALIAFGRGEWSGVGLGNSVQKLFYLPEAHTD) the chain is Periplasmic. A helical membrane pass occupies residues 273 to 293 (FVFAIIAEELGLLGSLLIIVL). Topologically, residues 294 to 316 (FGVLLWRGMYVSRVAERAGQLFN) are cytoplasmic. The helical transmembrane segment at 317-337 (AYAGYGVTLLLGGQALINLGV) threads the bilayer. At 338-348 (NTGLLPTKGLT) the chain is on the periplasmic side. A helical transmembrane segment spans residues 349-369 (LPLISYGGSSLIISCLCVAIL). Topologically, residues 370 to 397 (LRIGSEAVSGEQTEDESPKVKNRGGAQR) are cytoplasmic.

This sequence belongs to the SEDS family. FtsW subfamily.

The protein resides in the cell inner membrane. It carries out the reaction [GlcNAc-(1-&gt;4)-Mur2Ac(oyl-L-Ala-gamma-D-Glu-L-Lys-D-Ala-D-Ala)](n)-di-trans,octa-cis-undecaprenyl diphosphate + beta-D-GlcNAc-(1-&gt;4)-Mur2Ac(oyl-L-Ala-gamma-D-Glu-L-Lys-D-Ala-D-Ala)-di-trans,octa-cis-undecaprenyl diphosphate = [GlcNAc-(1-&gt;4)-Mur2Ac(oyl-L-Ala-gamma-D-Glu-L-Lys-D-Ala-D-Ala)](n+1)-di-trans,octa-cis-undecaprenyl diphosphate + di-trans,octa-cis-undecaprenyl diphosphate + H(+). It functions in the pathway cell wall biogenesis; peptidoglycan biosynthesis. Peptidoglycan polymerase that is essential for cell division. The polypeptide is Probable peptidoglycan glycosyltransferase FtsW (Hahella chejuensis (strain KCTC 2396)).